Reading from the N-terminus, the 615-residue chain is Elongation factor 4 (615 aa).

A tr-type G domain is found at 14–200 (QQIRNFCIIA…KVAELIPAPT (187 aa)). Residues 26–31 (DHGKST) and 147–150 (NKID) contribute to the GTP site.

Belongs to the TRAFAC class translation factor GTPase superfamily. Classic translation factor GTPase family. LepA subfamily.

Its subcellular location is the cell membrane. The enzyme catalyses GTP + H2O = GDP + phosphate + H(+). In terms of biological role, required for accurate and efficient protein synthesis under certain stress conditions. May act as a fidelity factor of the translation reaction, by catalyzing a one-codon backward translocation of tRNAs on improperly translocated ribosomes. Back-translocation proceeds from a post-translocation (POST) complex to a pre-translocation (PRE) complex, thus giving elongation factor G a second chance to translocate the tRNAs correctly. Binds to ribosomes in a GTP-dependent manner. The protein is Elongation factor 4 of Corynebacterium diphtheriae (strain ATCC 700971 / NCTC 13129 / Biotype gravis).